A 1070-amino-acid polypeptide reads, in one-letter code: Carbamoyl phosphate synthase large chain (1070 aa).

Residues 1-401 (MPKRDDIKTI…ALLKAVRSLE (401 aa)) are carboxyphosphate synthetic domain. ATP is bound by residues arginine 129, arginine 169, glycine 175, glycine 176, lysine 208, isoleucine 210, glutamate 215, glycine 241, isoleucine 242, histidine 243, glutamine 284, and glutamate 298. The ATP-grasp 1 domain maps to 133 to 327 (RDLMNELGEP…IAKLAAKIAV (195 aa)). Residues glutamine 284, glutamate 298, and asparagine 300 each coordinate Mg(2+). Mn(2+)-binding residues include glutamine 284, glutamate 298, and asparagine 300. An oligomerization domain region spans residues 402-546 (IGADHLLLEE…YSTYEEENES (145 aa)). Residues 547 to 929 (TRSAKESVIV…ALYKGFVASG (383 aa)) form a carbamoyl phosphate synthetic domain region. The ATP-grasp 2 domain occupies 671-861 (EKALGILQIP…MANVATRVIL (191 aa)). ATP contacts are provided by arginine 707, arginine 746, valine 748, glutamate 752, glycine 777, valine 778, histidine 779, serine 780, glutamine 820, and glutamate 832. The Mg(2+) site is built by glutamine 820, glutamate 832, and asparagine 834. Mn(2+)-binding residues include glutamine 820, glutamate 832, and asparagine 834. In terms of domain architecture, MGS-like spans 930–1070 (TTMHDYGTVL…SEVKQPKARV (141 aa)). Residues 930 to 1070 (TTMHDYGTVL…SEVKQPKARV (141 aa)) form an allosteric domain region.

This sequence belongs to the CarB family. As to quaternary structure, composed of two chains; the small (or glutamine) chain promotes the hydrolysis of glutamine to ammonia, which is used by the large (or ammonia) chain to synthesize carbamoyl phosphate. Tetramer of heterodimers (alpha,beta)4. Mg(2+) is required as a cofactor. It depends on Mn(2+) as a cofactor.

It carries out the reaction hydrogencarbonate + L-glutamine + 2 ATP + H2O = carbamoyl phosphate + L-glutamate + 2 ADP + phosphate + 2 H(+). The catalysed reaction is hydrogencarbonate + NH4(+) + 2 ATP = carbamoyl phosphate + 2 ADP + phosphate + 2 H(+). It participates in amino-acid biosynthesis; L-arginine biosynthesis; carbamoyl phosphate from bicarbonate: step 1/1. It functions in the pathway pyrimidine metabolism; UMP biosynthesis via de novo pathway; (S)-dihydroorotate from bicarbonate: step 1/3. In terms of biological role, large subunit of the glutamine-dependent carbamoyl phosphate synthetase (CPSase). CPSase catalyzes the formation of carbamoyl phosphate from the ammonia moiety of glutamine, carbonate, and phosphate donated by ATP, constituting the first step of 2 biosynthetic pathways, one leading to arginine and/or urea and the other to pyrimidine nucleotides. The large subunit (synthetase) binds the substrates ammonia (free or transferred from glutamine from the small subunit), hydrogencarbonate and ATP and carries out an ATP-coupled ligase reaction, activating hydrogencarbonate by forming carboxy phosphate which reacts with ammonia to form carbamoyl phosphate. The chain is Carbamoyl phosphate synthase large chain from Listeria monocytogenes serotype 4b (strain CLIP80459).